The sequence spans 140 residues: Ribosomal RNA large subunit methyltransferase H (140 aa).

Residues Leu-58, Gly-90, and 108–113 (LSLLTF) contribute to the S-adenosyl-L-methionine site.

It belongs to the RNA methyltransferase RlmH family. In terms of assembly, homodimer.

The protein resides in the cytoplasm. The enzyme catalyses pseudouridine(1915) in 23S rRNA + S-adenosyl-L-methionine = N(3)-methylpseudouridine(1915) in 23S rRNA + S-adenosyl-L-homocysteine + H(+). Specifically methylates the pseudouridine at position 1915 (m3Psi1915) in 23S rRNA. This chain is Ribosomal RNA large subunit methyltransferase H, found in Protochlamydia amoebophila (strain UWE25).